The following is a 181-amino-acid chain: Adenylate kinase (181 aa).

Residue 10–15 participates in ATP binding; sequence GAGKGT. The segment at 30-59 is NMP; it reads STGDLFRYNISNGTELGLEAKKYLDAGDLV. Residues threonine 31, arginine 36, 57 to 59, 85 to 88, and glutamine 92 contribute to the AMP site; these read DLV and GYPR. The segment at 126 to 132 is LID; that stretch reads GRGRDDD. Arginine 127 contacts ATP. AMP-binding residues include arginine 129 and arginine 140. An ATP-binding site is contributed by glycine 166.

The protein belongs to the adenylate kinase family. In terms of assembly, monomer.

Its subcellular location is the cytoplasm. It catalyses the reaction AMP + ATP = 2 ADP. It participates in purine metabolism; AMP biosynthesis via salvage pathway; AMP from ADP: step 1/1. In terms of biological role, catalyzes the reversible transfer of the terminal phosphate group between ATP and AMP. Plays an important role in cellular energy homeostasis and in adenine nucleotide metabolism. This is Adenylate kinase from Mycolicibacterium vanbaalenii (strain DSM 7251 / JCM 13017 / BCRC 16820 / KCTC 9966 / NRRL B-24157 / PYR-1) (Mycobacterium vanbaalenii).